The following is a 490-amino-acid chain: Keratin, type II cytoskeletal 8 (490 aa).

The span at 1–27 (MSIRVTQKSYKMSTSGPRAFSSRSFTS) shows a compositional bias: polar residues. A disordered region spans residues 1 to 48 (MSIRVTQKSYKMSTSGPRAFSSRSFTSGPGARISSSSFSRVGSSSSSF). The interval 1–96 (MSIRVTQKSY…DPNIQAVRTQ (96 aa)) is head. The residue at position 9 (serine 9) is a Phosphoserine; by PKC/PRKCE. Lysine 11 is covalently cross-linked (Glycyl lysine isopeptide (Lys-Gly) (interchain with G-Cter in SUMO2)). Serine 13, serine 15, serine 21, and serine 22 each carry phosphoserine. Arginine 23 is modified (omega-N-methylarginine). Serine 24 carries the post-translational modification Phosphoserine; by PKC/PRKCE. At threonine 26 the chain carries Phosphothreonine. Serine 27 is modified (phosphoserine). Arginine 32 bears the Omega-N-methylarginine mark. Serine 34, serine 37, and serine 39 each carry phosphoserine. A compositionally biased stretch (low complexity) spans 34–48 (SSSSFSRVGSSSSSF). Residue arginine 40 is modified to Omega-N-methylarginine. Phosphoserine is present on residues serine 43, serine 44, and serine 47. An Asymmetric dimethylarginine; alternate modification is found at arginine 49. Arginine 49 is modified (omega-N-methylarginine; alternate). A Phosphoserine modification is found at serine 51. Serine 80 is subject to Phosphoserine; by MAPK. The coil 1A stretch occupies residues 97–132 (EKEQIKSLNNKFASFIDKVRFLEQQNKMLETKWSLL). One can recognise an IF rod domain in the interval 97–408 (EKEQIKSLNN…KLLEGEESRL (312 aa)). Lysine 107 is subject to N6-malonyllysine. Residues lysine 128 and lysine 136 each participate in a glycyl lysine isopeptide (Lys-Gly) (interchain with G-Cter in SUMO2) cross-link. The segment at 133-149 (QQQKTSRSNMDNMFESY) is linker 1. The coil 1B stretch occupies residues 150–241 (INNLRRQLEA…QIHEEEIREL (92 aa)). A Glycyl lysine isopeptide (Lys-Gly) (interchain with G-Cter in SUMO1); alternate cross-link involves residue lysine 203. Lysine 203 is covalently cross-linked (Glycyl lysine isopeptide (Lys-Gly) (interchain with G-Cter in SUMO2); alternate). An N6-acetyllysine modification is found at lysine 213. The interval 242–265 (QSQISDTSVVLSMDNSRSLDMDGI) is linker 12. 2 positions are modified to phosphoserine: serine 259 and serine 280. A coil 2 region spans residues 266-403 (IAEVRAQYED…ITTYRKLLEG (138 aa)). Residues 267-387 (AEVRAQYEDI…REYQELMNVK (121 aa)) are necessary for interaction with PNN. Lysine 291 participates in a covalent cross-link: Glycyl lysine isopeptide (Lys-Gly) (interchain with G-Cter in SUMO2). Lysine 301 is covalently cross-linked (Glycyl lysine isopeptide (Lys-Gly) (interchain with G-Cter in SUMO2); alternate). Lysine 301 is subject to N6-acetyllysine; alternate. Residue lysine 310 forms a Glycyl lysine isopeptide (Lys-Gly) (interchain with G-Cter in SUMO2) linkage. A Glycyl lysine isopeptide (Lys-Gly) (interchain with G-Cter in SUMO2); alternate cross-link involves residue lysine 331. Residue lysine 331 is modified to N6-acetyllysine; alternate. The residue at position 336 (serine 336) is a Phosphoserine. Residue lysine 399 forms a Glycyl lysine isopeptide (Lys-Gly) (interchain with G-Cter in SUMO2) linkage. The segment at 404-490 (EESRLESGMQ…VSESSDVVSK (87 aa)) is tail. A phosphoserine mark is found at serine 406, serine 410, serine 416, serine 423, serine 430, serine 432, and serine 438. Residue lysine 479 forms a Glycyl lysine isopeptide (Lys-Gly) (interchain with G-Cter in SUMO1); alternate linkage. Lysine 479 participates in a covalent cross-link: Glycyl lysine isopeptide (Lys-Gly) (interchain with G-Cter in SUMO2); alternate. Serine 482, serine 484, serine 485, and serine 489 each carry phosphoserine.

Belongs to the intermediate filament family. As to quaternary structure, heterotetramer of two type I and two type II keratins. Forms a heterodimer with KRT18. Associates with KRT20. Interacts with PLEC isoform 1C, when in a heterodimer with KRT18. Interacts with PNN. When associated with KRT19, interacts with DMD. Interacts with TCHP. Interacts with APEX1. Interacts with GPER1. Interacts with EPPK1. Interacts with PKP1 and PKP2. Phosphorylation on serine residues is enhanced during EGF stimulation and mitosis. Ser-80 phosphorylation plays an important role in keratin filament reorganization. In terms of processing, O-glycosylated. O-GlcNAcylation at multiple sites increases solubility, and decreases stability by inducing proteasomal degradation. Post-translationally, O-glycosylated (O-GlcNAcylated), in a cell cycle-dependent manner. As to expression, expressed in abundance in the epithelia of colon, bladder, ileum, and stomach, with lower expression observed in earskin (at protein level). Also expressed in pancreas, liver, dudenum and jejunum.

The protein resides in the cytoplasm. It localises to the nucleus. Its subcellular location is the nucleoplasm. The protein localises to the nucleus matrix. In terms of biological role, together with KRT19, helps to link the contractile apparatus to dystrophin at the costameres of striated muscle. The sequence is that of Keratin, type II cytoskeletal 8 (Krt8) from Mus musculus (Mouse).